A 115-amino-acid chain; its full sequence is U3-lycotoxin-Ls1g (115 aa).

An N-terminal signal peptide occupies residues 1–20 (MKFVLLFGVFLVTLFSYSSA). Positions 21 to 44 (EMLDDFDQADEDELLSLIEKEEAR) are excised as a propeptide. Cystine bridges form between C48–C63, C55–C72, C62–C87, and C74–C85.

Belongs to the neurotoxin 19 (CSTX) family. 01 subfamily. In terms of tissue distribution, expressed by the venom gland.

The protein resides in the secreted. The polypeptide is U3-lycotoxin-Ls1g (Lycosa singoriensis (Wolf spider)).